We begin with the raw amino-acid sequence, 303 residues long: Methionyl-tRNA formyltransferase (303 aa).

Residue 108 to 111 (SDLP) coordinates (6S)-5,6,7,8-tetrahydrofolate.

The protein belongs to the Fmt family.

The catalysed reaction is L-methionyl-tRNA(fMet) + (6R)-10-formyltetrahydrofolate = N-formyl-L-methionyl-tRNA(fMet) + (6S)-5,6,7,8-tetrahydrofolate + H(+). Functionally, attaches a formyl group to the free amino group of methionyl-tRNA(fMet). The formyl group appears to play a dual role in the initiator identity of N-formylmethionyl-tRNA by promoting its recognition by IF2 and preventing the misappropriation of this tRNA by the elongation apparatus. The protein is Methionyl-tRNA formyltransferase of Rickettsia prowazekii (strain Madrid E).